Consider the following 697-residue polypeptide: Elongation factor G (697 aa).

The tr-type G domain occupies 8–282 (ENTRNIGIMA…AIVDYMPSPV (275 aa)). GTP is bound by residues 17–24 (AHIDAGKT), 81–85 (DTPGH), and 135–138 (NKMD).

The protein belongs to the TRAFAC class translation factor GTPase superfamily. Classic translation factor GTPase family. EF-G/EF-2 subfamily.

Its subcellular location is the cytoplasm. Catalyzes the GTP-dependent ribosomal translocation step during translation elongation. During this step, the ribosome changes from the pre-translocational (PRE) to the post-translocational (POST) state as the newly formed A-site-bound peptidyl-tRNA and P-site-bound deacylated tRNA move to the P and E sites, respectively. Catalyzes the coordinated movement of the two tRNA molecules, the mRNA and conformational changes in the ribosome. The chain is Elongation factor G from Acetivibrio thermocellus (strain ATCC 27405 / DSM 1237 / JCM 9322 / NBRC 103400 / NCIMB 10682 / NRRL B-4536 / VPI 7372) (Clostridium thermocellum).